Reading from the N-terminus, the 286-residue chain is Hydroxysteroid 11-beta-dehydrogenase 1-like protein (286 aa).

The signal sequence occupies residues 1–17 (MGIHIKRWCFIILVASA). Residues 39–65 (GAST…TARR), 90–91 (DM), and 117–119 (NHI) contribute to the NADP(+) site. Ser-168 is a binding site for substrate. The active-site Proton acceptor is the Tyr-181. Residues 181–185 (YAASK) and 214–220 (GLIDTQS) contribute to the NADP(+) site.

The protein belongs to the short-chain dehydrogenases/reductases (SDR) family.

Its subcellular location is the secreted. The catalysed reaction is cortisone + NADPH + H(+) = cortisol + NADP(+). In terms of biological role, unidirectional NADP(+)-dependent cortisol dehydrogenase (in vitro). This chain is Hydroxysteroid 11-beta-dehydrogenase 1-like protein (hsd11b1l), found in Xenopus tropicalis (Western clawed frog).